A 51-amino-acid polypeptide reads, in one-letter code: Small, acid-soluble spore protein K (51 aa).

The tract at residues 1 to 51 is disordered; it reads MRNKAKGFPNPISFNGNKANNADEHASKRPDGTTRDRPQERMRSSNHFNSL. The segment covering 21–43 has biased composition (basic and acidic residues); it reads NADEHASKRPDGTTRDRPQERMR.

The protein belongs to the SspK family.

It is found in the spore core. The sequence is that of Small, acid-soluble spore protein K from Shouchella clausii (strain KSM-K16) (Alkalihalobacillus clausii).